The following is a 449-amino-acid chain: Streptomycin-6-phosphate phosphatase (449 aa).

The first 32 residues, 1 to 32, serve as a signal peptide directing secretion; the sequence is MRFAYGRLPWRRGAVLGSALLVLVTAPAASTA. Residue D50 coordinates Mg(2+). D50 contributes to the Zn(2+) binding site. The active-site Phosphoserine intermediate is the S99. The Mg(2+) site is built by D151 and T153. The interval 268 to 290 is disordered; the sequence is APGGTAPQRCATRNPGRPAGTPD. E321 contacts Mg(2+). Zn(2+) contacts are provided by D326, H330, D368, H369, and H412.

The protein belongs to the alkaline phosphatase family. Requires Mg(2+) as cofactor. It depends on Zn(2+) as a cofactor.

The protein resides in the secreted. The enzyme catalyses streptomycin 6-phosphate + H2O = streptomycin + phosphate. It functions in the pathway antibiotic biosynthesis; streptomycin biosynthesis. Specifically cleaves both streptomycin-6-phosphate and, more slowly, streptomycin-3''-phosphate during the biosynthesis of streptomycin. This is Streptomycin-6-phosphate phosphatase (strK) from Streptomyces griseus.